Reading from the N-terminus, the 128-residue chain is MGIQGGSVLFGLLLVLAVFCHSGHSLQCYNCPNPTTDCKTAINCSSGFDTCLIARAGLQVYNQCWKFANCNFNDISTLLKESELQYFCCKKDLCNFNEQLENGGTSLSEKTVVLLVTLLLAAAWCLHP.

The N-terminal stretch at 1–25 is a signal peptide; sequence MGIQGGSVLFGLLLVLAVFCHSGHS. Positions 26-108 constitute a UPAR/Ly6 domain; it reads LQCYNCPNPT…QLENGGTSLS (83 aa). Intrachain disulfides connect Cys28–Cys51, Cys31–Cys38, Cys44–Cys64, Cys70–Cys88, and Cys89–Cys94. Residue Asn43 is glycosylated (N-linked (GlcNAc...) asparagine). A lipid anchor (GPI-anchor amidated asparagine) is attached at Asn102. Residues 103–128 constitute a propeptide, removed in mature form; sequence GGTSLSEKTVVLLVTLLLAAAWCLHP.

In terms of assembly, interacts with T-cell surface antigen CD2. N- and O-glycosylated.

The protein resides in the cell membrane. Its subcellular location is the secreted. Functionally, potent inhibitor of the complement membrane attack complex (MAC) action, which protects self-cells from damage during complement activation. Acts by binding to the beta-haipins of C8 (C8A and C8B) components of the assembling MAC, forming an intermolecular beta-sheet that prevents incorporation of the multiple copies of C9 required for complete formation of the osmolytic pore. In Chlorocebus aethiops (Green monkey), this protein is CD59 glycoprotein.